A 797-amino-acid chain; its full sequence is LPS-assembly protein LptD (797 aa).

The N-terminal stretch at 1–30 is a signal peptide; it reads MKEGRKRLRAGYCYMLAGVVGVASTGSSRA.

This sequence belongs to the LptD family. In terms of assembly, component of the lipopolysaccharide transport and assembly complex. Interacts with LptE and LptA.

The protein localises to the cell outer membrane. Functionally, together with LptE, is involved in the assembly of lipopolysaccharide (LPS) at the surface of the outer membrane. In Hahella chejuensis (strain KCTC 2396), this protein is LPS-assembly protein LptD.